The chain runs to 251 residues: Pyridoxine 5'-phosphate synthase (251 aa).

3-amino-2-oxopropyl phosphate is bound by residues Asn-8 and Arg-19. His-44 functions as the Proton acceptor in the catalytic mechanism. The 1-deoxy-D-xylulose 5-phosphate site is built by Arg-46 and His-51. The active-site Proton acceptor is the Glu-76. Position 106 (Thr-106) interacts with 1-deoxy-D-xylulose 5-phosphate. The active-site Proton donor is His-200. 3-amino-2-oxopropyl phosphate contacts are provided by residues Asp-201 and 223-224; that span reads GH.

The protein belongs to the PNP synthase family. As to quaternary structure, homooctamer; tetramer of dimers.

The protein localises to the cytoplasm. It carries out the reaction 3-amino-2-oxopropyl phosphate + 1-deoxy-D-xylulose 5-phosphate = pyridoxine 5'-phosphate + phosphate + 2 H2O + H(+). Its pathway is cofactor biosynthesis; pyridoxine 5'-phosphate biosynthesis; pyridoxine 5'-phosphate from D-erythrose 4-phosphate: step 5/5. Its function is as follows. Catalyzes the complicated ring closure reaction between the two acyclic compounds 1-deoxy-D-xylulose-5-phosphate (DXP) and 3-amino-2-oxopropyl phosphate (1-amino-acetone-3-phosphate or AAP) to form pyridoxine 5'-phosphate (PNP) and inorganic phosphate. This chain is Pyridoxine 5'-phosphate synthase, found in Agrobacterium fabrum (strain C58 / ATCC 33970) (Agrobacterium tumefaciens (strain C58)).